Consider the following 202-residue polypeptide: Putative 3-methyladenine DNA glycosylase (202 aa).

It belongs to the DNA glycosylase MPG family.

This is Putative 3-methyladenine DNA glycosylase from Staphylococcus aureus (strain MRSA252).